A 355-amino-acid chain; its full sequence is 3-isopropylmalate dehydrogenase (355 aa).

Residues arginine 90, arginine 100, arginine 128, and aspartate 222 each coordinate substrate. Mg(2+) contacts are provided by aspartate 222, aspartate 246, and aspartate 250. 280–292 contacts NAD(+); it reads GSAPDIAGKGVAN.

Belongs to the isocitrate and isopropylmalate dehydrogenases family. LeuB type 1 subfamily. Homodimer. The cofactor is Mg(2+). Requires Mn(2+) as cofactor.

Its subcellular location is the cytoplasm. It carries out the reaction (2R,3S)-3-isopropylmalate + NAD(+) = 4-methyl-2-oxopentanoate + CO2 + NADH. The protein operates within amino-acid biosynthesis; L-leucine biosynthesis; L-leucine from 3-methyl-2-oxobutanoate: step 3/4. Catalyzes the oxidation of 3-carboxy-2-hydroxy-4-methylpentanoate (3-isopropylmalate) to 3-carboxy-4-methyl-2-oxopentanoate. The product decarboxylates to 4-methyl-2 oxopentanoate. The chain is 3-isopropylmalate dehydrogenase from Cupriavidus metallidurans (strain ATCC 43123 / DSM 2839 / NBRC 102507 / CH34) (Ralstonia metallidurans).